The chain runs to 323 residues: Acetyl esterase (323 aa).

The Involved in the stabilization of the negatively charged intermediate by the formation of the oxyanion hole motif lies at 91–93 (HGG). Active-site residues include Ser-165, Asp-262, and His-292.

It belongs to the 'GDXG' lipolytic enzyme family. In terms of assembly, homodimer. Interacts with MalT and MelA.

Its subcellular location is the cytoplasm. Functionally, displays esterase activity towards short chain fatty esters (acyl chain length of up to 8 carbons). Able to hydrolyze triacetylglycerol (triacetin) and tributyrylglycerol (tributyrin), but not trioleylglycerol (triolein) or cholesterol oleate. Negatively regulates MalT activity by antagonizing maltotriose binding. Inhibits MelA galactosidase activity. This Salmonella agona (strain SL483) protein is Acetyl esterase.